The sequence spans 318 residues: MADVEDRAAKGISDYDQGGVKTTELERKIEDMENKNQELTRENRELKERLERLTGEIEEMKDVEAEMNQRFGEMEKEIEEYEEEKKALEAISTRAVELETEVSNLHDDLITSLNGVDKTAEEVAELKKALAEIVEKLEGCEKEAEGLRKDRAEVEKRVRDLERKIGVLEVREMEEKSKKLRSEEEMREIDDEKKREIEELQKTVIVLNLELVKNVEELKKWKSKKKLTEEALSETQKREKELELKKDELLKKVEEGNKTVFALNERTMKPSNGVRDTNGGDQKGSLEAEYQWPVVAAGSVGAAGLVAATFFVCYSKLR.

A disordered region spans residues 1-39 (MADVEDRAAKGISDYDQGGVKTTELERKIEDMENKNQEL). The Cytoplasmic portion of the chain corresponds to 1–291 (MADVEDRAAK…QKGSLEAEYQ (291 aa)). Residues 19–260 (GVKTTELERK…KKVEEGNKTV (242 aa)) are a coiled coil. Residues 23–39 (TELERKIEDMENKNQEL) are compositionally biased toward basic and acidic residues. Residues 292 to 312 (WPVVAAGSVGAAGLVAATFFV) form a helical membrane-spanning segment. Residues 313-318 (CYSKLR) are Mitochondrial intermembrane-facing.

In terms of assembly, homodimer. Interacts with PMD2.

Its subcellular location is the peroxisome membrane. It localises to the mitochondrion outer membrane. Involved in morphogenesis and proliferation of peroxisomes and mitochondria, independently from the previously defined pathway controlled by the FIS1-DRP3 complex. In Arabidopsis thaliana (Mouse-ear cress), this protein is Peroxisomal and mitochondrial division factor 1.